We begin with the raw amino-acid sequence, 1487 residues long: Adhesion G protein-coupled receptor L2 (1487 aa).

An N-terminal signal peptide occupies residues 1-25 (MVSSGCRMRSLWFIIIISFSPSTEG). At 26-855 (FSRAALPFGL…VHHLLLTVIT (830 aa)) the chain is on the extracellular side. The region spanning 41 to 130 (SCEGYSIDLR…KYLEVQYECV (90 aa)) is the SUEL-type lectin domain. An N-linked (GlcNAc...) asparagine glycan is attached at Asn-99. Positions 139 to 398 (VCPGTLKAIV…ILRYSLEFGP (260 aa)) constitute an Olfactomedin-like domain. Over residues 423-439 (STTSSASQRGPVSSTAA) the composition is skewed to polar residues. The segment at 423–461 (STTSSASQRGPVSSTAAGPQDGSRGTKPPPAVSTTKIPP) is disordered. 2 N-linked (GlcNAc...) asparagine glycosylation sites follow: Asn-524 and Asn-735. The region spanning 663 to 841 (TRVSMPTENI…AILMAHREIA (179 aa)) is the GAIN-B domain. 2 cysteine pairs are disulfide-bonded: Cys-792–Cys-823 and Cys-811–Cys-825. The GPS stretch occupies residues 792–841 (CSFWNYSERTMMGYWSTQGCKLVDTNKTRTTCACSHLTNFAILMAHREIA). The tract at residues 829–841 (TNFAILMAHREIA) is stachel. A helical transmembrane segment spans residues 856-876 (WVGIVVSLVCLAICIFTFCFF). Residues 877–884 (RGLQSDRN) are Cytoplasmic-facing. A helical transmembrane segment spans residues 885–905 (TIHKNLCINLFIAEFIFLIGI). At 906–911 (DKTKYT) the chain is on the extracellular side. The chain crosses the membrane as a helical span at residues 912–932 (IACPVFAGLLHFFFLAAFSWM). Residues 933–955 (CLEGVQLYLMLVEVFESEYSRKK) are Cytoplasmic-facing. Residues 956 to 976 (YYYVAGYLFPATVVGVSAAID) form a helical membrane-spanning segment. Residues 977 to 994 (YKSYGTVQACWLHVDNYF) lie on the Extracellular side of the membrane. The chain crosses the membrane as a helical span at residues 995-1015 (IWSFIGPVTFIILLNIIFLVI). The Cytoplasmic portion of the chain corresponds to 1016–1064 (TLCKMVKHSNTLKPDSSRLENINNYRVCDGYYNTDLPGYEDNKPFIKSW). Residues 1065–1085 (VLGAFALLCLLGLTWSFGLLF) traverse the membrane as a helical segment. Residues 1086–1090 (VNEET) are Extracellular-facing. A helical membrane pass occupies residues 1091–1111 (VVMAYLFTAFNAFQGLFIFIF). Residues 1386–1430 (EADDHLQSPNRDSLYTSMPNLRDSPYPESSPDMAEDLSPSRRSEN) form a disordered region. Polar residues predominate over residues 1392-1404 (QSPNRDSLYTSMP). 3 positions are modified to phosphoserine: Ser-1402, Ser-1437, and Ser-1458.

This sequence belongs to the G-protein coupled receptor 2 family. Adhesion G-protein coupled receptor (ADGR) subfamily. Heterodimer of 2 chains generated by proteolytic processing; the large extracellular N-terminal fragment and the membrane-bound C-terminal fragment predominantly remain associated and non-covalently linked. Autoproteolytically processed at the GPS region of the GAIN-B domain; this cleavage modulates receptor activity. As to expression, ubiquitously expressed. In neurons, specifically localizes to dendritic domains of CA1 pyramidal neurons in the S. lacunosummoleculare.

It localises to the postsynaptic cell membrane. Forms a heterodimer of 2 chains generated by proteolytic processing that remain associated through non-covalent interactions mediated by the GAIN-B domain. In the inactivated receptor, the Stachel sequence (also named stalk) is embedded in the GAIN-B domain, where it adopts a beta-strand conformation. On activation, the Stachel moves into the 7 transmembrane region and adopts a twisted hook-shaped configuration that forms contacts within the receptor, leading to coupling of a G-alpha protein, which activates signaling. The cleaved GAIN-B and N-terminal domains can then dissociate from the rest of the receptor. Orphan adhesion G-protein coupled receptor (aGPCR), which mediates synapse specificity. Ligand binding causes a conformation change that triggers signaling via guanine nucleotide-binding proteins (G proteins) and modulates the activity of downstream effectors. Following G-protein coupled receptor activation, associates with cell adhesion molecules that are expressed at the surface of adjacent cells to direct synapse specificity. Specifically mediates the establishment of perforant-path synapses on CA1-region pyramidal neurons in the hippocampus. Localizes to postsynaptic spines in excitatory synapses in the S.lacunosum-moleculare and interacts with presynaptic cell adhesion molecules, such as teneurins, promoting synapse formation. This Mus musculus (Mouse) protein is Adhesion G protein-coupled receptor L2.